A 351-amino-acid polypeptide reads, in one-letter code: Alcohol dehydrogenase 2 (351 aa).

Zn(2+) contacts are provided by cysteine 47, histidine 70, cysteine 101, cysteine 104, cysteine 107, cysteine 115, and cysteine 157. Residues 181–187 (GAGGGLG), aspartate 205, lysine 209, 271–273 (VGL), and arginine 343 each bind NAD(+).

This sequence belongs to the zinc-containing alcohol dehydrogenase family. As to quaternary structure, homotetramer. Zn(2+) serves as cofactor.

The enzyme catalyses a primary alcohol + NAD(+) = an aldehyde + NADH + H(+). The catalysed reaction is a secondary alcohol + NAD(+) = a ketone + NADH + H(+). This is Alcohol dehydrogenase 2 (sodh-2) from Caenorhabditis elegans.